A 185-amino-acid chain; its full sequence is NEDD8-conjugating enzyme UBE2F (185 aa).

Methionine 1 is modified (N-acetylmethionine). In terms of domain architecture, UBC core spans 32–185 (VRDKLLVKEV…VDEYIKRYAR (154 aa)). The Glycyl thioester intermediate role is filled by cysteine 116.

This sequence belongs to the ubiquitin-conjugating enzyme family. UBE2F subfamily. Interacts with UBA3 and RBX2. Interacts (N-terminally acetylated form) with (via DCUN1 domain) DCUN1D1, DCUN1D2, DCUN1D3, DCUN1D4 and DCUN1D5. The acetylation of Met-1 increases affinity for DCUN1D3 by about 2 orders of magnitude and is crucial for NEDD8 transfer to cullins.

It catalyses the reaction [E1 NEDD8-activating enzyme]-S-[NEDD8 protein]-yl-L-cysteine + [E2 NEDD8-conjugating enzyme]-L-cysteine = [E1 NEDD8-activating enzyme]-L-cysteine + [E2 NEDD8-conjugating enzyme]-S-[NEDD8-protein]-yl-L-cysteine.. It functions in the pathway protein modification; protein neddylation. Its function is as follows. Accepts the ubiquitin-like protein NEDD8 from the UBA3-NAE1 E1 complex and catalyzes its covalent attachment to other proteins. Together with the E3 ubiquitin ligase RNF7/RBX2, specifically neddylates cullin-5 (CUL5). Does not neddylate CUL1, CUL2, CUL3, CUL4A or CUL4B. Mediates neddylation of the CUL9-RBX1 complex. In Rattus norvegicus (Rat), this protein is NEDD8-conjugating enzyme UBE2F (Ube2f).